Here is a 251-residue protein sequence, read N- to C-terminus: 4-hydroxy-tetrahydrodipicolinate reductase (251 aa).

8–13 (GALGRM) contacts NAD(+). Arg36 serves as a coordination point for NADP(+). NAD(+) contacts are provided by residues 89–91 (GTT) and 113–116 (TTNF). The active-site Proton donor/acceptor is His145. His146 lines the (S)-2,3,4,5-tetrahydrodipicolinate pocket. Residue Lys149 is the Proton donor of the active site. Position 155-156 (155-156 (GT)) interacts with (S)-2,3,4,5-tetrahydrodipicolinate.

It belongs to the DapB family.

It is found in the cytoplasm. The enzyme catalyses (S)-2,3,4,5-tetrahydrodipicolinate + NAD(+) + H2O = (2S,4S)-4-hydroxy-2,3,4,5-tetrahydrodipicolinate + NADH + H(+). It catalyses the reaction (S)-2,3,4,5-tetrahydrodipicolinate + NADP(+) + H2O = (2S,4S)-4-hydroxy-2,3,4,5-tetrahydrodipicolinate + NADPH + H(+). It functions in the pathway amino-acid biosynthesis; L-lysine biosynthesis via DAP pathway; (S)-tetrahydrodipicolinate from L-aspartate: step 4/4. Catalyzes the conversion of 4-hydroxy-tetrahydrodipicolinate (HTPA) to tetrahydrodipicolinate. The chain is 4-hydroxy-tetrahydrodipicolinate reductase from Methanocorpusculum labreanum (strain ATCC 43576 / DSM 4855 / Z).